A 469-amino-acid chain; its full sequence is Protein RUFY3 (469 aa).

2 positions are modified to phosphothreonine: Thr5 and Thr12. Phosphoserine is present on residues Ser34 and Ser49. At Thr51 the chain carries Phosphothreonine. Positions 95-227 constitute an RUN domain; it reads DSDYAPLQQF…IDANFCMKGE (133 aa). Coiled-coil stretches lie at residues 271–362 and 422–463; these read NRHL…VEKE and KSEL…AANK.

In terms of assembly, interacts with PAK1. Interacts (via C-terminus) with Ras-related Rab-5 proteins. Interacts (via C-terminus) with Ras-related Rap-2 proteins. Interacts with PIK3CA and PIK3R1. Interacts (via N-terminus) with FSCN1; this interaction induces neuron axon development. Interacts with DBN1. Interacts (via the second coiled coil) with GTP-, but not GDP-bound ARL8A and ARL8B. Interacts with dynactin/DCTN1 and the dynein intermediate chain DYNC1I1/2. Directly interacts with DYNC1LI1. In terms of processing, phosphorylated by PAK1. Isoform 1 is partially phosphorylated. In terms of tissue distribution, overexpressed in gastric cancer cells and tissues (at protein level).

Its subcellular location is the cytoplasm. It is found in the endomembrane system. The protein resides in the cell projection. It localises to the invadopodium. The protein localises to the perikaryon. Its subcellular location is the growth cone. It is found in the filopodium. The protein resides in the lamellipodium. It localises to the lysosome. In terms of biological role, ARL8 effector that promotes the coupling of endolysosomes to dynein-dynactin for retrograde transport along microtubules. Acts by binding both GTP-bound ARL8 and dynein-dynactin. In nonneuronal cells, promotes concentration of endolysosomes in the juxtanuclear area. In hippocampal neurons, drives retrograde transport of endolysosomes from the axon to the soma. Plays a role in the generation of neuronal polarity formation and axon growth. Implicated in the formation of a single axon by developing neurons. May inhibit the formation of additional axons by inhibition of PI3K in minor neuronal processes. Plays a role in the formation of F-actin-enriched protrusive structures at the cell periphery. Plays a role in cytoskeletal organization by regulating the subcellular localization of FSCN1 and DBN1 at axonal growth cones. This chain is Protein RUFY3, found in Homo sapiens (Human).